The following is a 374-amino-acid chain: uncharacterized protein (374 aa).

The helical transmembrane segment at 27–49 (AISPILALLIVLGVTIVVGAVFY) threads the bilayer.

The protein localises to the membrane. This is an uncharacterized protein from Methanocaldococcus jannaschii (strain ATCC 43067 / DSM 2661 / JAL-1 / JCM 10045 / NBRC 100440) (Methanococcus jannaschii).